The following is a 387-amino-acid chain: Phosphoglycerate kinase (387 aa).

Substrate contacts are provided by residues 21-23, arginine 36, 59-62, arginine 113, and arginine 146; these read DLN and HLGR. ATP is bound by residues lysine 197, glutamate 314, and 340-343; that span reads GGDT.

The protein belongs to the phosphoglycerate kinase family. As to quaternary structure, monomer.

The protein resides in the cytoplasm. It carries out the reaction (2R)-3-phosphoglycerate + ATP = (2R)-3-phospho-glyceroyl phosphate + ADP. It participates in carbohydrate degradation; glycolysis; pyruvate from D-glyceraldehyde 3-phosphate: step 2/5. The sequence is that of Phosphoglycerate kinase from Pectobacterium carotovorum subsp. carotovorum (strain PC1).